The following is a 454-amino-acid chain: Glutamyl-tRNA(Gln) amidotransferase subunit A (454 aa).

Catalysis depends on charge relay system residues Lys-56 and Ser-131. The active-site Acyl-ester intermediate is Ser-155.

Belongs to the amidase family. GatA subfamily. Heterotrimer of A, B and C subunits.

The catalysed reaction is L-glutamyl-tRNA(Gln) + L-glutamine + ATP + H2O = L-glutaminyl-tRNA(Gln) + L-glutamate + ADP + phosphate + H(+). Its function is as follows. Allows the formation of correctly charged Gln-tRNA(Gln) through the transamidation of misacylated Glu-tRNA(Gln) in organisms which lack glutaminyl-tRNA synthetase. The reaction takes place in the presence of glutamine and ATP through an activated gamma-phospho-Glu-tRNA(Gln). This is Glutamyl-tRNA(Gln) amidotransferase subunit A from Campylobacter lari (strain RM2100 / D67 / ATCC BAA-1060).